Here is a 91-residue protein sequence, read N- to C-terminus: Small ribosomal subunit protein uS19 (91 aa).

This sequence belongs to the universal ribosomal protein uS19 family.

In terms of biological role, protein S19 forms a complex with S13 that binds strongly to the 16S ribosomal RNA. This Metamycoplasma hominis (strain ATCC 23114 / DSM 25592 / NBRC 14850 / NCTC 10111 / PG21) (Mycoplasma hominis) protein is Small ribosomal subunit protein uS19.